Consider the following 188-residue polypeptide: Elongation factor P (188 aa).

Belongs to the elongation factor P family.

It is found in the cytoplasm. It participates in protein biosynthesis; polypeptide chain elongation. Functionally, involved in peptide bond synthesis. Stimulates efficient translation and peptide-bond synthesis on native or reconstituted 70S ribosomes in vitro. Probably functions indirectly by altering the affinity of the ribosome for aminoacyl-tRNA, thus increasing their reactivity as acceptors for peptidyl transferase. The protein is Elongation factor P of Methylorubrum extorquens (strain CM4 / NCIMB 13688) (Methylobacterium extorquens).